A 392-amino-acid chain; its full sequence is uncharacterized protein (392 aa).

Transmembrane regions (helical) follow at residues 2–23 (WLAN…SLYI), 38–60 (SGYV…GRFG), 73–95 (GTGI…LFFL), 153–175 (FTYT…LFGV), 195–217 (VLSY…LIQT), 237–259 (VNLA…LLAR), 272–291 (RILI…QALA), 297–319 (LLVF…TAAI), 331–353 (VLGY…GGII), and 357–379 (FTIS…MLWI).

Belongs to the major facilitator superfamily.

It is found in the cell membrane. This is an uncharacterized protein from Bacillus subtilis (strain 168).